We begin with the raw amino-acid sequence, 432 residues long: Phosphoprotein associated with glycosphingolipid-enriched microdomains 1 (432 aa).

Topologically, residues 1-16 are extracellular; that stretch reads MGPAGSLLGSGQMQIT. Residues 17 to 37 traverse the membrane as a helical; Signal-anchor for type III membrane protein segment; that stretch reads LWGSLAAVAIFFVITFLIFLC. S-palmitoyl cysteine attachment occurs at residues cysteine 37 and cysteine 40. At 38-432 the chain is on the cytoplasmic side; sequence SSCDREKKPR…LQQGRDITRL (395 aa). Serine 50 and serine 61 each carry phosphoserine. Residue tyrosine 105 is modified to Phosphotyrosine; by LYN. The segment covering 110–122 has biased composition (polar residues); it reads TSASDLLDSQDST. Residues 110-137 are disordered; it reads TSASDLLDSQDSTGKPKCHQSRELPRIP. Residues tyrosine 163, tyrosine 181, and tyrosine 227 each carry the phosphotyrosine modification. 2 disordered regions span residues 197 to 230 and 244 to 432; these read EKGH…YASV and SILG…ITRL. Residues 220–230 show a composition bias toward basic and acidic residues; it reads GKAEFAEYASV. Serine 229 is modified (phosphoserine). A compositionally biased stretch (polar residues) spans 316-356; it reads MYSSVNKPGQLVNKSGQSLTVPESTYTSIQGDPQRSPSSCN. Tyrosine 317 bears the Phosphotyrosine; by FYN and LYN mark. Residues 317 to 320 form an interaction with CSK region; sequence YSSV. At serine 354 the chain carries Phosphoserine. Residue tyrosine 359 is modified to Phosphotyrosine. At serine 380 the chain carries Phosphoserine. 2 positions are modified to phosphotyrosine: tyrosine 387 and tyrosine 417. The interaction with NHERF1 stretch occupies residues 430 to 432; the sequence is TRL.

In terms of assembly, interacts with FYN. When phosphorylated, interacts with CSK. Interacts with NHERF1/EBP50. In resting T-cells, part of a PAG1-NHERF1-MSN complex which is disrupted upon TCR activation. Interacts with LYN on plasma membrane lipid rafts. Identified in a complex with LYN and STAT3. Palmitoylated. In terms of processing, phosphorylated by FYN on Tyr-317 in resting T-cells; which promotes interaction with CSK. Dephosphorylated by PTPRC/CD45 upon TCR activation; which leads to CSK dissociation. May also be dephosphorylated by PTPN11. Hyperphosphorylated in mast cells upon FCER1 activation. Phosphorylated by LYN. Ubiquitously expressed. Present in germinal center B-cells, plasma cells, T-cells, monocytes and platelets (at protein level).

The protein localises to the cell membrane. Functionally, negatively regulates TCR (T-cell antigen receptor)-mediated signaling in T-cells and FCER1 (high affinity immunoglobulin epsilon receptor)-mediated signaling in mast cells. Promotes CSK activation and recruitment to lipid rafts, which results in LCK inhibition. Inhibits immunological synapse formation by preventing dynamic arrangement of lipid raft proteins. May be involved in cell adhesion signaling. The chain is Phosphoprotein associated with glycosphingolipid-enriched microdomains 1 (PAG1) from Homo sapiens (Human).